The chain runs to 622 residues: Elongation factor 4 (622 aa).

Positions 17–198 (ELLRNFCIIA…QIVRQIPAPV (182 aa)) constitute a tr-type G domain. Residues 29-34 (DHGKST) and 145-148 (NKID) each bind GTP.

This sequence belongs to the TRAFAC class translation factor GTPase superfamily. Classic translation factor GTPase family. LepA subfamily.

The protein resides in the cell membrane. The catalysed reaction is GTP + H2O = GDP + phosphate + H(+). In terms of biological role, required for accurate and efficient protein synthesis under certain stress conditions. May act as a fidelity factor of the translation reaction, by catalyzing a one-codon backward translocation of tRNAs on improperly translocated ribosomes. Back-translocation proceeds from a post-translocation (POST) complex to a pre-translocation (PRE) complex, thus giving elongation factor G a second chance to translocate the tRNAs correctly. Binds to ribosomes in a GTP-dependent manner. The polypeptide is Elongation factor 4 (Kineococcus radiotolerans (strain ATCC BAA-149 / DSM 14245 / SRS30216)).